A 386-amino-acid polypeptide reads, in one-letter code: Putative aminotransferase YugH (386 aa).

Lys234 is subject to N6-(pyridoxal phosphate)lysine.

It belongs to the class-I pyridoxal-phosphate-dependent aminotransferase family. It depends on pyridoxal 5'-phosphate as a cofactor.

It is found in the cytoplasm. The protein is Putative aminotransferase YugH (yugH) of Bacillus subtilis (strain 168).